We begin with the raw amino-acid sequence, 270 residues long: Very long chain fatty acid elongase 3 (270 aa).

Asparagine 6 carries an N-linked (GlcNAc...) asparagine glycan. The next 2 membrane-spanning stretches (helical) occupy residues 29 to 49 (FFEE…VLIA) and 63 to 83 (LQGP…LGAV). N-linked (GlcNAc...) asparagine glycosylation is present at asparagine 110. The next 5 helical transmembrane spans lie at 115–135 (FWSW…AFII), 140–160 (PLIF…SFGY), 164–184 (VPAG…MYTY), 198–218 (LPML…IVSI), and 235–255 (HLFW…HFFC). The Di-lysine motif motif lies at 266–270 (KTKSQ).

The protein belongs to the ELO family. ELOVL3 subfamily. As to quaternary structure, interacts with TECR. Post-translationally, N-Glycosylated. Testis.

It is found in the endoplasmic reticulum membrane. The catalysed reaction is a very-long-chain acyl-CoA + malonyl-CoA + H(+) = a very-long-chain 3-oxoacyl-CoA + CO2 + CoA. It carries out the reaction eicosanoyl-CoA + malonyl-CoA + H(+) = 3-oxodocosanoyl-CoA + CO2 + CoA. The enzyme catalyses hexadecanoyl-CoA + malonyl-CoA + H(+) = 3-oxooctadecanoyl-CoA + CO2 + CoA. It catalyses the reaction octadecanoyl-CoA + malonyl-CoA + H(+) = 3-oxoeicosanoyl-CoA + CO2 + CoA. The catalysed reaction is (9Z)-octadecenoyl-CoA + malonyl-CoA + H(+) = 3-oxo-(11Z)-eicosenoyl-CoA + CO2 + CoA. It carries out the reaction (9Z,12Z)-octadecadienoyl-CoA + malonyl-CoA + H(+) = (11Z,14Z)-3-oxoicosa-11,14-dienoyl-CoA + CO2 + CoA. The enzyme catalyses (9Z,12Z,15Z)-octadecatrienoyl-CoA + malonyl-CoA + H(+) = (11Z,14Z,17Z)-3-oxoeicosatrienoyl-CoA + CO2 + CoA. It catalyses the reaction docosanoyl-CoA + malonyl-CoA + H(+) = 3-oxotetracosanoyl-CoA + CO2 + CoA. The catalysed reaction is tetradecanoyl-CoA + malonyl-CoA + H(+) = 3-oxohexadecanoyl-CoA + CO2 + CoA. It participates in lipid metabolism; polyunsaturated fatty acid biosynthesis. Its function is as follows. Catalyzes the first and rate-limiting reaction of the four reactions that constitute the long-chain fatty acids elongation cycle. This endoplasmic reticulum-bound enzymatic process allows the addition of 2 carbons to the chain of long- and very long-chain fatty acids (VLCFAs) per cycle. Condensing enzyme that exhibits activity toward saturated and unsaturated acyl-CoA substrates with higher activity toward C18 acyl-CoAs, especially C18:0 acyl-CoAs. May participate in the production of saturated and monounsaturated VLCFAs of different chain lengths that are involved in multiple biological processes as precursors of membrane lipids and lipid mediators. This chain is Very long chain fatty acid elongase 3, found in Homo sapiens (Human).